The following is a 654-amino-acid chain: Fructose-1,6-bisphosphatase class 3 (654 aa).

The disordered stretch occupies residues 288–307 (NPAFKPKKRPDKHERLTQRE). The span at 298–307 (DKHERLTQRE) shows a compositional bias: basic and acidic residues.

The protein belongs to the FBPase class 3 family. Requires Mn(2+) as cofactor.

The enzyme catalyses beta-D-fructose 1,6-bisphosphate + H2O = beta-D-fructose 6-phosphate + phosphate. It participates in carbohydrate biosynthesis; gluconeogenesis. This chain is Fructose-1,6-bisphosphatase class 3, found in Staphylococcus aureus (strain USA300).